A 551-amino-acid chain; its full sequence is Lysine--tRNA ligase (551 aa).

The 'HIGH' region signature appears at 54–62; the sequence is PSGLPHIGT. A 'KMSKS' region motif is present at residues 303–307; the sequence is KISKS. Residue Lys306 participates in ATP binding.

The protein belongs to the class-I aminoacyl-tRNA synthetase family.

The protein localises to the cytoplasm. The catalysed reaction is tRNA(Lys) + L-lysine + ATP = L-lysyl-tRNA(Lys) + AMP + diphosphate. The sequence is that of Lysine--tRNA ligase from Brucella melitensis biotype 1 (strain ATCC 23456 / CCUG 17765 / NCTC 10094 / 16M).